The primary structure comprises 303 residues: Probable 5-dehydro-4-deoxyglucarate dehydratase (303 aa).

Belongs to the DapA family.

It catalyses the reaction 5-dehydro-4-deoxy-D-glucarate + H(+) = 2,5-dioxopentanoate + CO2 + H2O. It functions in the pathway carbohydrate acid metabolism; D-glucarate degradation; 2,5-dioxopentanoate from D-glucarate: step 2/2. This Paracidovorax citrulli (strain AAC00-1) (Acidovorax citrulli) protein is Probable 5-dehydro-4-deoxyglucarate dehydratase.